Here is a 434-residue protein sequence, read N- to C-terminus: UDP-N-acetylglucosamine 1-carboxyvinyltransferase 1 (434 aa).

Phosphoenolpyruvate is bound at residue 22–23 (KN). Arg-93 is a UDP-N-acetyl-alpha-D-glucosamine binding site. The Proton donor role is filled by Cys-117. At Cys-117 the chain carries 2-(S-cysteinyl)pyruvic acid O-phosphothioketal. UDP-N-acetyl-alpha-D-glucosamine contacts are provided by residues 122-126 (RPIDQ), Asp-306, and Val-328.

The protein belongs to the EPSP synthase family. MurA subfamily.

It localises to the cytoplasm. It carries out the reaction phosphoenolpyruvate + UDP-N-acetyl-alpha-D-glucosamine = UDP-N-acetyl-3-O-(1-carboxyvinyl)-alpha-D-glucosamine + phosphate. Its pathway is cell wall biogenesis; peptidoglycan biosynthesis. Functionally, cell wall formation. Adds enolpyruvyl to UDP-N-acetylglucosamine. This Bacillus anthracis protein is UDP-N-acetylglucosamine 1-carboxyvinyltransferase 1.